Here is a 227-residue protein sequence, read N- to C-terminus: Germin-like protein subfamily 1 member 3 (227 aa).

Positions 1 to 24 (MKYPFQCFLAKIILLALASSFVSC) are cleaved as a signal peptide. The cysteines at positions 34 and 50 are disulfide-linked. Residues 64–212 (SGLNIPGNTN…AFALDINIVR (149 aa)) enclose the Cupin type-1 domain. The Mn(2+) site is built by histidine 109, histidine 111, and glutamate 116. Residue asparagine 136 is glycosylated (N-linked (GlcNAc...) asparagine). Histidine 160 provides a ligand contact to Mn(2+).

Belongs to the germin family. Oligomer (believed to be a pentamer but probably hexamer).

The protein resides in the secreted. It localises to the extracellular space. It is found in the apoplast. May play a role in plant defense. Probably has no oxalate oxidase activity even if the active site is conserved. The protein is Germin-like protein subfamily 1 member 3 of Arabidopsis thaliana (Mouse-ear cress).